The following is an 82-amino-acid chain: Small ribosomal subunit protein bS16 (82 aa).

It belongs to the bacterial ribosomal protein bS16 family.

In Dehalococcoides mccartyi (strain ATCC BAA-2266 / KCTC 15142 / 195) (Dehalococcoides ethenogenes (strain 195)), this protein is Small ribosomal subunit protein bS16.